Here is a 254-residue protein sequence, read N- to C-terminus: Splicing factor tls1 (254 aa).

Residues 69-83 (KEKQLNTANEPHEAN) show a composition bias toward basic and acidic residues. 2 disordered regions span residues 69–90 (KEKQ…SAQS) and 195–216 (RKRQ…LRTS). Residues 195 to 204 (RKRQKKRARM) show a composition bias toward basic residues. The span at 205–216 (KEKLDSKALRTS) shows a compositional bias: basic and acidic residues.

This sequence belongs to the TLS1 family. Component of the spliceosome. Interacts with brr2.

It is found in the cytoplasm. The protein resides in the nucleus. Plays a role in pre-mRNA splicing by facilitating excision of introns featuring long spacing between the branchpoint and 3'-splice site. Assists the splicing of several components involved in chromatin organization, such as several shelterin complex subunits. This is Splicing factor tls1 from Schizosaccharomyces pombe (strain 972 / ATCC 24843) (Fission yeast).